The sequence spans 312 residues: Ribosomal protein L11 methyltransferase (312 aa).

Residues Thr-162, Gly-183, Asp-205, and Asn-248 each contribute to the S-adenosyl-L-methionine site.

It belongs to the methyltransferase superfamily. PrmA family.

It localises to the cytoplasm. The catalysed reaction is L-lysyl-[protein] + 3 S-adenosyl-L-methionine = N(6),N(6),N(6)-trimethyl-L-lysyl-[protein] + 3 S-adenosyl-L-homocysteine + 3 H(+). Its function is as follows. Methylates ribosomal protein L11. The sequence is that of Ribosomal protein L11 methyltransferase from Geobacillus kaustophilus (strain HTA426).